The chain runs to 273 residues: Putative carboxypeptidase YodJ (273 aa).

The N-terminal stretch at 1–23 (MKKSGKWFSLAAALSVTAIVGAG) is a signal peptide. The N-palmitoyl cysteine moiety is linked to residue Cys-24. Cys-24 carries S-diacylglycerol cysteine lipidation. Residues 27–58 (SNGDAQKDTKTTAETKQTEQKTADSKKSNTQN) are disordered. Residues 31–53 (AQKDTKTTAETKQTEQKTADSKK) are compositionally biased toward basic and acidic residues.

The protein belongs to the peptidase M15B family.

It is found in the cell membrane. This is Putative carboxypeptidase YodJ (yodJ) from Bacillus subtilis (strain 168).